A 223-amino-acid chain; its full sequence is Cytotoxic T-lymphocyte protein 4 (223 aa).

An N-terminal signal peptide occupies residues 1–35 (MACLGFQRHKAQLNLATRTWPCTLLFFLLFIPVFC). Residues 36–161 (KAMHVAQPAV…IDPEPCPDSD (126 aa)) lie on the Extracellular side of the membrane. The region spanning 39-140 (HVAQPAVVLA…VELMYPPPYY (102 aa)) is the Ig-like V-type domain. The homodimerization stretch occupies residues 46 to 50 (VLASS). Disulfide bonds link cysteine 58–cysteine 129 and cysteine 85–cysteine 103. Asparagine 113 is a glycosylation site (N-linked (GlcNAc...) asparagine). The tract at residues 134–139 (MYPPPY) is important for interaction with CD80 and CD86. Residue asparagine 145 is glycosylated (N-linked (GlcNAc...) asparagine). Positions 150 to 155 (YVIDPE) are homodimerization. The helical transmembrane segment at 162–182 (FLLWILAAVSSGLFFYSFLLT) threads the bilayer. The Cytoplasmic segment spans residues 183-223 (AVSLSKMLKKRSPLTTGVYVKMPPTEPECEKQFQPYFIPIN). Tyrosine 201 carries the phosphotyrosine; by TXK and JAK2 modification.

In terms of assembly, homodimer; disulfide-linked. Binds to CD80/B7-1 and CD86/B7.2. Interacts with ICOSLG. In terms of processing, N-glycosylation is important for dimerization. Post-translationally, phosphorylation at Tyr-201 prevents binding to the AP-2 adapter complex, blocks endocytosis, and leads to retention of CTLA4 on the cell surface. Widely expressed with highest levels in lymphoid tissues. Detected in activated T-cells where expression levels are 30- to 50-fold less than CD28, the stimulatory coreceptor, on the cell surface following activation.

It localises to the cell membrane. Functionally, inhibitory receptor acting as a major negative regulator of T-cell responses. The affinity of CTLA4 for its natural B7 family ligands, CD80 and CD86, is considerably stronger than the affinity of their cognate stimulatory coreceptor CD28. The polypeptide is Cytotoxic T-lymphocyte protein 4 (CTLA4) (Homo sapiens (Human)).